A 173-amino-acid chain; its full sequence is Ribosome maturation factor RimM (173 aa).

Residues 98–170 (EDEYYWCDLL…RMTVSLPEGL (73 aa)) enclose the PRC barrel domain.

The protein belongs to the RimM family. As to quaternary structure, binds ribosomal protein uS19.

The protein resides in the cytoplasm. In terms of biological role, an accessory protein needed during the final step in the assembly of 30S ribosomal subunit, possibly for assembly of the head region. Essential for efficient processing of 16S rRNA. May be needed both before and after RbfA during the maturation of 16S rRNA. It has affinity for free ribosomal 30S subunits but not for 70S ribosomes. The polypeptide is Ribosome maturation factor RimM (Geotalea uraniireducens (strain Rf4) (Geobacter uraniireducens)).